The sequence spans 140 residues: Thioredoxin M-type, chloroplastic (140 aa).

A chloroplast-targeting transit peptide spans 1 to 34 (MALVARRAAVPSARSSARPAFARAAPRRSVVVRA). Residues 35 to 140 (EAGAVNDDTF…IVQTVEKYLN (106 aa)) enclose the Thioredoxin domain. Residues Cys-64 and Cys-67 each act as nucleophile in the active site. Cys-64 and Cys-67 are joined by a disulfide.

The protein belongs to the thioredoxin family. Plant M-type subfamily. Forms a complex with heterodimeric ferredoxin-thioredoxin reductase (FTR) and ferredoxin.

It is found in the plastid. It localises to the chloroplast. Its function is as follows. Participates in various redox reactions through the reversible oxidation of the active center dithiol to a disulfide. The M form is known to activate NADP-malate dehydrogenase. In Chlamydomonas reinhardtii (Chlamydomonas smithii), this protein is Thioredoxin M-type, chloroplastic (TRXM).